We begin with the raw amino-acid sequence, 195 residues long: 7-methyl-GTP pyrophosphatase (195 aa).

The active-site Proton acceptor is the Asp70.

The protein belongs to the Maf family. YceF subfamily. A divalent metal cation serves as cofactor.

It localises to the cytoplasm. It carries out the reaction N(7)-methyl-GTP + H2O = N(7)-methyl-GMP + diphosphate + H(+). Functionally, nucleoside triphosphate pyrophosphatase that hydrolyzes 7-methyl-GTP (m(7)GTP). May have a dual role in cell division arrest and in preventing the incorporation of modified nucleotides into cellular nucleic acids. The chain is 7-methyl-GTP pyrophosphatase from Shewanella sp. (strain MR-4).